Reading from the N-terminus, the 254-residue chain is MSRKNLIKLNHDPTVTYSTKDDADELFDDLSSSPLHENVSWISWFCSRPGREYFVEVKEDFIEDLFNLTGLNLAVPFYNEALDLILDRTAPDTLENFDMDVIETSAQILYGLIHQRYIITRTGLHQMAEKYSMGIFGCCPRVNCCYTHVLPAGLSDIVGKMPVMLFCPNCLDLYAPSSSRYKNIDGSFFGATFPHLFFESYPELNPKRSIPCGKIYQPRIYGFKVSELSKTGPRMQWLRMYLEDSGSDSESESD.

Belongs to the casein kinase 2 subunit beta family. As to quaternary structure, tetramer composed of two alpha chains, one beta chain and one beta' chain. In terms of processing, phosphorylated by alpha subunit.

In terms of biological role, regulatory subunit of casein kinase II/CK2. As part of the kinase complex regulates the basal catalytic activity of the alpha subunit a constitutively active serine/threonine-protein kinase that phosphorylates a large number of substrates containing acidic residues C-terminal to the phosphorylated serine or threonine. This is Casein kinase II subunit beta-2 from Schizosaccharomyces pombe (strain 972 / ATCC 24843) (Fission yeast).